The primary structure comprises 127 residues: Anti-adapter protein IraD (127 aa).

This sequence belongs to the GpW/Gp25 family. IraD subfamily. Interacts with RssB.

The protein localises to the cytoplasm. Its function is as follows. Inhibits RpoS proteolysis by regulating RssB activity, thereby increasing the stability of the sigma stress factor RpoS during oxidative stress. Its effect on RpoS stability is due to its interaction with RssB, which probably blocks the interaction of RssB with RpoS, and the consequent delivery of the RssB-RpoS complex to the ClpXP protein degradation pathway. The protein is Anti-adapter protein IraD of Escherichia coli O127:H6 (strain E2348/69 / EPEC).